A 352-amino-acid chain; its full sequence is Glycerol-3-phosphate dehydrogenase [NAD(P)+] (352 aa).

The NADPH site is built by serine 11, tryptophan 12, arginine 32, and lysine 105. Sn-glycerol 3-phosphate is bound by residues lysine 105, glycine 133, and serine 135. Alanine 137 is an NADPH binding site. 5 residues coordinate sn-glycerol 3-phosphate: lysine 188, aspartate 241, serine 251, arginine 252, and asparagine 253. The Proton acceptor role is filled by lysine 188. Residue arginine 252 coordinates NADPH. The NADPH site is built by valine 276 and glutamate 278.

The protein belongs to the NAD-dependent glycerol-3-phosphate dehydrogenase family.

It localises to the cytoplasm. The enzyme catalyses sn-glycerol 3-phosphate + NAD(+) = dihydroxyacetone phosphate + NADH + H(+). It carries out the reaction sn-glycerol 3-phosphate + NADP(+) = dihydroxyacetone phosphate + NADPH + H(+). It participates in membrane lipid metabolism; glycerophospholipid metabolism. Its function is as follows. Catalyzes the reduction of the glycolytic intermediate dihydroxyacetone phosphate (DHAP) to sn-glycerol 3-phosphate (G3P), the key precursor for phospholipid synthesis. This is Glycerol-3-phosphate dehydrogenase [NAD(P)+] from Desulfitobacterium hafniense (strain Y51).